Here is a 407-residue protein sequence, read N- to C-terminus: Na(+)-translocating NADH-quinone reductase subunit F (407 aa).

Residues 6-26 (IFLAIGMFTAIVLGLVAIILV) form a helical membrane-spanning segment. The 2Fe-2S ferredoxin-type domain occupies 35–127 (GDVTIQINGE…DMQIRVPEEV (93 aa)). [2Fe-2S] cluster is bound by residues C70, C76, C79, and C111. Positions 130 to 269 (VKKWECTVES…YGPFGEFFAK (140 aa)) constitute an FAD-binding FR-type domain.

Belongs to the NqrF family. In terms of assembly, composed of six subunits; NqrA, NqrB, NqrC, NqrD, NqrE and NqrF. Requires [2Fe-2S] cluster as cofactor. FAD serves as cofactor.

The protein resides in the cell inner membrane. It catalyses the reaction a ubiquinone + n Na(+)(in) + NADH + H(+) = a ubiquinol + n Na(+)(out) + NAD(+). Functionally, NQR complex catalyzes the reduction of ubiquinone-1 to ubiquinol by two successive reactions, coupled with the transport of Na(+) ions from the cytoplasm to the periplasm. The first step is catalyzed by NqrF, which accepts electrons from NADH and reduces ubiquinone-1 to ubisemiquinone by a one-electron transfer pathway. The polypeptide is Na(+)-translocating NADH-quinone reductase subunit F (Pseudomonas aeruginosa (strain UCBPP-PA14)).